A 386-amino-acid chain; its full sequence is Indole-3-acetate O-methyltransferase 1 (386 aa).

Y30 is a binding site for S-adenosyl-L-methionine. Substrate is bound by residues Y30 and 33–37 (NSQAQ). S-adenosyl-L-methionine is bound by residues G72, 72 to 73 (GC), N78, 108 to 111 (FSDL), D110, 152 to 154 (SFY), and 169 to 171 (AFS). Substrate is bound at residue 170–174 (FSLHW). Mg(2+)-binding residues include N191, V195, R277, D278, F280, and N281. S334 contacts substrate.

The protein belongs to the methyltransferase superfamily. SABATH family. Homodimer. Mg(2+) is required as a cofactor. In terms of tissue distribution, expressed in seedling roots and leaves. Expressed in the stigma, funiculus, and vascular bundles in sepals, petals and stamens.

The enzyme catalyses (indol-3-yl)acetate + S-adenosyl-L-methionine = methyl (indol-3-yl)acetate + S-adenosyl-L-homocysteine. In terms of biological role, catalyzes the methylation of the free carboxyl end of the plant hormone indole-3-acetic acid (IAA). Converts IAA to IAA methyl ester (MeIAA). Regulates IAA activities by IAA methylation. Methylation of IAA plays an important role in regulating plant development and auxin homeostasis. Required for correct leaf pattern formation. MeIAA seems to be an inactive form of IAA. In Arabidopsis thaliana (Mouse-ear cress), this protein is Indole-3-acetate O-methyltransferase 1 (IAMT1).